A 487-amino-acid polypeptide reads, in one-letter code: Glycogen synthase (487 aa).

K20 provides a ligand contact to ADP-alpha-D-glucose.

Belongs to the glycosyltransferase 1 family. Bacterial/plant glycogen synthase subfamily.

The enzyme catalyses [(1-&gt;4)-alpha-D-glucosyl](n) + ADP-alpha-D-glucose = [(1-&gt;4)-alpha-D-glucosyl](n+1) + ADP + H(+). Its pathway is glycan biosynthesis; glycogen biosynthesis. Functionally, synthesizes alpha-1,4-glucan chains using ADP-glucose. This is Glycogen synthase from Aliivibrio fischeri (strain MJ11) (Vibrio fischeri).